A 400-amino-acid chain; its full sequence is Diphosphomevalonate decarboxylase (400 aa).

Residues 25–28, R80, 155–160, and T211 each bind (R)-5-diphosphomevalonate; these read YWGK and SGSACR.

Belongs to the diphosphomevalonate decarboxylase family. In terms of assembly, homodimer.

The protein localises to the cytoplasm. It catalyses the reaction (R)-5-diphosphomevalonate + ATP = isopentenyl diphosphate + ADP + phosphate + CO2. The protein operates within steroid biosynthesis; cholesterol biosynthesis. Catalyzes the ATP dependent decarboxylation of (R)-5-diphosphomevalonate to form isopentenyl diphosphate (IPP). Functions in the mevalonate (MVA) pathway leading to isopentenyl diphosphate (IPP), a key precursor for the biosynthesis of isoprenoids and sterol synthesis. This Danio rerio (Zebrafish) protein is Diphosphomevalonate decarboxylase (mvd).